The sequence spans 270 residues: Large ribosomal subunit protein bL21m (270 aa).

The transit peptide at 1–68 directs the protein to the mitochondrion; sequence MASLRCFREL…HWYRSQDRCF (68 aa). Residues 68 to 113 form a disordered region; it reads FSSNTKDTDEDEESSEGEDDDEEEGEDFEDSADMEVEREYSPAEKV. Residues 75–101 show a composition bias toward acidic residues; it reads TDEDEESSEGEDDDEEEGEDFEDSADM. Positions 102 to 113 are enriched in basic and acidic residues; that stretch reads EVEREYSPAEKV.

This sequence belongs to the bacterial ribosomal protein bL21 family. Component of the mitochondrial ribosome large subunit. Constitutively expressed in roots, stems, leaves, flowers, pistils and siliques.

Its subcellular location is the mitochondrion. In terms of biological role, this protein binds to 23S ribosomal RNA in the presence of protein L20. Required for karyogamy during female gametophyte development, when the two polar nuclei fuse to form the diploid central cell nucleus, and during double fertilization of the egg cell and the central cell. This Arabidopsis thaliana (Mouse-ear cress) protein is Large ribosomal subunit protein bL21m.